A 274-amino-acid chain; its full sequence is ATP synthase subunit a (274 aa).

Transmembrane regions (helical) follow at residues 43–63, 103–123, 149–169, 223–243, and 245–265; these read TLNI…LLVF, VIAP…MMDL, DVSI…FYSI, LIFI…LSVP, and AIFH…LTIV.

It belongs to the ATPase A chain family. As to quaternary structure, F-type ATPases have 2 components, CF(1) - the catalytic core - and CF(0) - the membrane proton channel. CF(1) has five subunits: alpha(3), beta(3), gamma(1), delta(1), epsilon(1). CF(0) has three main subunits: a(1), b(2) and c(9-12). The alpha and beta chains form an alternating ring which encloses part of the gamma chain. CF(1) is attached to CF(0) by a central stalk formed by the gamma and epsilon chains, while a peripheral stalk is formed by the delta and b chains.

The protein resides in the cell inner membrane. Key component of the proton channel; it plays a direct role in the translocation of protons across the membrane. The protein is ATP synthase subunit a of Yersinia pestis bv. Antiqua (strain Antiqua).